A 61-amino-acid chain; its full sequence is Protein translocase subunit SecE (61 aa).

Residues 1–34 (MAELQERIRHFWKESRRAFLVTKKPNWATYKRAA) lie on the Cytoplasmic side of the membrane. A helical transmembrane segment spans residues 35 to 55 (KITGLGIILIGLIGMLIRIVG). The Extracellular portion of the chain corresponds to 56–61 (ILILGG).

Belongs to the SecE/SEC61-gamma family. In terms of assembly, component of the Sec protein translocase complex. Heterotrimer consisting of alpha (SecY), beta (SecG) and gamma (SecE) subunits. The heterotrimers can form oligomers, although 1 heterotrimer is thought to be able to translocate proteins. Interacts with the ribosome. May interact with SecDF, and other proteins may be involved.

It localises to the cell membrane. Its function is as follows. Essential subunit of the protein translocation channel SecYEG. Clamps together the 2 halves of SecY. May contact the channel plug during translocation. The protein is Protein translocase subunit SecE of Pyrococcus furiosus (strain ATCC 43587 / DSM 3638 / JCM 8422 / Vc1).